We begin with the raw amino-acid sequence, 535 residues long: RNA-splicing ligase RtcB homolog 1 (535 aa).

A compositionally biased stretch (basic residues) spans 1–16; it reads MAKSRYSRKNKGKKLQ. The segment at 1–29 is disordered; it reads MAKSRYSRKNKGKKLQRVQENTVSTEEKS. Mn(2+)-binding residues include Asp-152, Cys-155, His-260, His-292, and His-383. 259 to 263 serves as a coordination point for GMP; that stretch reads NHYLE. Residues 383–384, 432–435, Ser-439, 458–461, and Lys-534 contribute to the GMP site; these read HN, GGSM, and HGAG. The GMP-histidine intermediate role is filled by His-458.

The protein belongs to the RtcB family. In terms of assembly, catalytic component of the tRNA-splicing ligase complex. Requires Mn(2+) as cofactor.

The catalysed reaction is a 3'-end 3'-phospho-ribonucleotide-RNA + a 5'-end dephospho-ribonucleoside-RNA + GTP = a ribonucleotidyl-ribonucleotide-RNA + GMP + diphosphate. The enzyme catalyses a 3'-end 2',3'-cyclophospho-ribonucleotide-RNA + a 5'-end dephospho-ribonucleoside-RNA + GTP + H2O = a ribonucleotidyl-ribonucleotide-RNA + GMP + diphosphate + H(+). Catalytic subunit of the tRNA-splicing ligase complex that acts by directly joining spliced tRNA halves to mature-sized tRNAs by incorporating the precursor-derived splice junction phosphate into the mature tRNA as a canonical 3',5'-phosphodiester. May act as an RNA ligase with broad substrate specificity, and may function toward other RNAs. The sequence is that of RNA-splicing ligase RtcB homolog 1 from Entamoeba dispar (strain ATCC PRA-260 / SAW760).